The primary structure comprises 410 residues: Multifunctional CCA protein (410 aa).

The ATP site is built by Gly-8 and Arg-11. CTP contacts are provided by Gly-8 and Arg-11. Positions 21 and 23 each coordinate Mg(2+). 3 residues coordinate ATP: Arg-91, Arg-137, and Arg-140. CTP is bound by residues Arg-91, Arg-137, and Arg-140. An HD domain is found at 228–329 (TGVHVLSVLQ…LELLQSFDVY (102 aa)).

It belongs to the tRNA nucleotidyltransferase/poly(A) polymerase family. Bacterial CCA-adding enzyme type 1 subfamily. In terms of assembly, monomer. Can also form homodimers and oligomers. Mg(2+) serves as cofactor. Requires Ni(2+) as cofactor.

The catalysed reaction is a tRNA precursor + 2 CTP + ATP = a tRNA with a 3' CCA end + 3 diphosphate. The enzyme catalyses a tRNA with a 3' CCA end + 2 CTP + ATP = a tRNA with a 3' CCACCA end + 3 diphosphate. Functionally, catalyzes the addition and repair of the essential 3'-terminal CCA sequence in tRNAs without using a nucleic acid template. Adds these three nucleotides in the order of C, C, and A to the tRNA nucleotide-73, using CTP and ATP as substrates and producing inorganic pyrophosphate. tRNA 3'-terminal CCA addition is required both for tRNA processing and repair. Also involved in tRNA surveillance by mediating tandem CCA addition to generate a CCACCA at the 3' terminus of unstable tRNAs. While stable tRNAs receive only 3'-terminal CCA, unstable tRNAs are marked with CCACCA and rapidly degraded. The chain is Multifunctional CCA protein from Pseudomonas aeruginosa (strain ATCC 15692 / DSM 22644 / CIP 104116 / JCM 14847 / LMG 12228 / 1C / PRS 101 / PAO1).